We begin with the raw amino-acid sequence, 1034 residues long: Enteropeptidase (1034 aa).

The propeptide occupies 1–51; sequence MGSKRIIPSRHRSLSTYEVMFTALFAILMVLCAGLIAVSWLTIKGSEKDAA. The Cytoplasmic portion of the chain corresponds to 2–18; the sequence is GSKRIIPSRHRSLSTYE. The helical; Signal-anchor for type II membrane protein transmembrane segment at 19–47 threads the bilayer; the sequence is VMFTALFAILMVLCAGLIAVSWLTIKGSE. The Extracellular segment spans residues 48–1034; it reads KDAALGKSHE…FTEWIQSFLH (987 aa). An SEA domain is found at 54–169; sequence KSHEARGTMK…NSIDITESLE (116 aa). 4 N-linked (GlcNAc...) asparagine glycosylation sites follow: Asn116, Asn147, Asn170, and Asn194. The 42-residue stretch at 197–238 folds into the LDL-receptor class A 1 domain; it reads IECLPGSRPCADALKCIAVDLFCDGELNCPDGSDEDSKICAT. Cystine bridges form between Cys199-Cys212, Cys206-Cys225, Cys219-Cys236, and Cys240-Cys268. The CUB 1 domain occupies 240 to 349; sequence CDGKFLLTES…IGFNATYTAF (110 aa). Residues Asn283, Asn343, Asn350, Asn403, Asn455, Asn485, Asn518, Asn549, and Asn645 are each glycosylated (N-linked (GlcNAc...) asparagine). Residues 357-519 enclose the MAM domain; it reads DEKINCNFED…ISLTYGICNV (163 aa). Cysteines 539 and 567 form a disulfide. The 111-residue stretch at 539 to 649 folds into the CUB 2 domain; that stretch reads CGGPFELWEP…GGFKANFTTG (111 aa). One can recognise an LDL-receptor class A 2 domain in the interval 656–694; sequence EPCKEDNFQCENGECVLLVNLCDGFSHCKDGSDEAHCVR. Intrachain disulfides connect Cys658-Cys670, Cys665-Cys683, and Cys677-Cys692. One can recognise an SRCR domain in the interval 693–786; sequence VRFLNGTANN…LILLQCNHKS (94 aa). N-linked (GlcNAc...) asparagine glycosylation is found at Asn697, Asn701, Asn721, Asn740, and Asn761. Disulfide bonds link Cys772–Cys782, Cys787–Cys911, Cys825–Cys841, Cys925–Cys992, Cys956–Cys971, and Cys982–Cys1010. Positions 800–1034 constitute a Peptidase S1 domain; it reads IVGGNDSREG…FTEWIQSFLH (235 aa). N-linked (GlcNAc...) asparagine glycosylation occurs at Asn804. His840 acts as the Charge relay system in catalysis. An N-linked (GlcNAc...) asparagine glycan is attached at Asn863. Asp891 functions as the Charge relay system in the catalytic mechanism. N-linked (GlcNAc...) asparagine glycosylation is found at Asn902 and Asn964. Ser986 serves as the catalytic Charge relay system.

The protein belongs to the peptidase S1 family. In terms of assembly, heterotrimer of a catalytic (light) chain, a multidomain (heavy) chain, and a mini chain. Post-translationally, the chains are derived from a single precursor that is cleaved by a trypsin-like protease. The mini chain may be cleaved by elastase.

Its subcellular location is the membrane. It carries out the reaction Activation of trypsinogen by selective cleavage of 6-Lys-|-Ile-7 bond.. Its function is as follows. Responsible for initiating activation of pancreatic proteolytic proenzymes (trypsin, chymotrypsin and carboxypeptidase A). It catalyzes the conversion of trypsinogen to trypsin which in turn activates other proenzymes including chymotrypsinogen, procarboxypeptidases, and proelastases. The polypeptide is Enteropeptidase (TMPRSS15) (Sus scrofa (Pig)).